We begin with the raw amino-acid sequence, 206 residues long: Inactive ribonuclease-like protein 9 (206 aa).

An N-terminal signal peptide occupies residues 1 to 26; the sequence is MMRTLITTHSLLLFLLLLQLLQPLQF. 3 cysteine pairs are disulfide-bonded: Cys-99/Cys-154, Cys-117/Cys-169, and Cys-124/Cys-131. Asn-132 is a glycosylation site (N-linked (GlcNAc...) asparagine).

It belongs to the pancreatic ribonuclease family.

It localises to the secreted. Its function is as follows. Does not exhibit any ribonuclease activity. The polypeptide is Inactive ribonuclease-like protein 9 (RNASE9) (Saimiri boliviensis boliviensis (Bolivian squirrel monkey)).